Here is a 281-residue protein sequence, read N- to C-terminus: Rhomboid protease AarA (281 aa).

Helical transmembrane passes span 16–36 (FSLG…AVYF), 76–96 (MLHS…VIGI), 105–125 (FKLL…SAYW), 145–165 (IGVG…IYLI), 185–205 (QLYN…QSGV), 208–228 (AAHI…ILVP), and 233–253 (VANL…IYLY). Ser-150 acts as the Nucleophile in catalysis. His-210 acts as the Charge relay system in catalysis.

It belongs to the peptidase S54 family.

The protein localises to the cell membrane. The catalysed reaction is Cleaves type-1 transmembrane domains using a catalytic dyad composed of serine and histidine that are contributed by different transmembrane domains.. Functionally, rhomboid serine protease that catalyzes intramembrane proteolysis. Mediates quorum-sensing and the subsequent regulation of target genes via activation of the Tat protein export system. Catalyzes the proteolytic activation of TatA by removal of its N-terminal extension. The protein is Rhomboid protease AarA (aarA) of Providencia stuartii.